The following is a 422-amino-acid chain: UDP-N-acetylglucosamine 1-carboxyvinyltransferase (422 aa).

A phosphoenolpyruvate-binding site is contributed by 22-23; that stretch reads KN. Arg92 is a binding site for UDP-N-acetyl-alpha-D-glucosamine. The active-site Proton donor is the Cys116. 2-(S-cysteinyl)pyruvic acid O-phosphothioketal is present on Cys116. Residues Asp306 and Ile328 each contribute to the UDP-N-acetyl-alpha-D-glucosamine site.

Belongs to the EPSP synthase family. MurA subfamily.

Its subcellular location is the cytoplasm. The enzyme catalyses phosphoenolpyruvate + UDP-N-acetyl-alpha-D-glucosamine = UDP-N-acetyl-3-O-(1-carboxyvinyl)-alpha-D-glucosamine + phosphate. It functions in the pathway cell wall biogenesis; peptidoglycan biosynthesis. Cell wall formation. Adds enolpyruvyl to UDP-N-acetylglucosamine. This Elusimicrobium minutum (strain Pei191) protein is UDP-N-acetylglucosamine 1-carboxyvinyltransferase.